Here is a 202-residue protein sequence, read N- to C-terminus: LexA repressor (202 aa).

Positions isoleucine 28 to lysine 47 form a DNA-binding region, H-T-H motif. Catalysis depends on for autocatalytic cleavage activity residues serine 126 and lysine 163.

The protein belongs to the peptidase S24 family. Homodimer.

The enzyme catalyses Hydrolysis of Ala-|-Gly bond in repressor LexA.. Its function is as follows. Represses a number of genes involved in the response to DNA damage (SOS response), including recA and lexA. In the presence of single-stranded DNA, RecA interacts with LexA causing an autocatalytic cleavage which disrupts the DNA-binding part of LexA, leading to derepression of the SOS regulon and eventually DNA repair. This chain is LexA repressor, found in Leptospira biflexa serovar Patoc (strain Patoc 1 / Ames).